The primary structure comprises 266 residues: Hemin import ATP-binding protein HmuV (266 aa).

In terms of domain architecture, ABC transporter spans 2-242 (IEAVDICVQR…QNLRDVYSCS (241 aa)). ATP is bound at residue 34–41 (GPNGSGKS).

The protein belongs to the ABC transporter superfamily. Heme (hemin) importer (TC 3.A.1.14.5) family. As to quaternary structure, the complex is composed of two ATP-binding proteins (HmuV), two transmembrane proteins (HmuU) and a solute-binding protein (HmuT).

It localises to the cell inner membrane. Functionally, part of the ABC transporter complex HmuTUV involved in hemin import. Responsible for energy coupling to the transport system. The polypeptide is Hemin import ATP-binding protein HmuV (Bartonella henselae (strain ATCC 49882 / DSM 28221 / CCUG 30454 / Houston 1) (Rochalimaea henselae)).